The chain runs to 137 residues: Histone H2B.4 (137 aa).

Positions 1-37 are enriched in basic and acidic residues; it reads MAPKAEKKPAEKKPTEEKAEKKPRAEKRVPGKEGGEK. The tract at residues 1–45 is disordered; sequence MAPKAEKKPAEKKPTEEKAEKKPRAEKRVPGKEGGEKKGKKKAKK. An N6-acetyllysine mark is found at lysine 7 and lysine 27. Residue lysine 133 forms a Glycyl lysine isopeptide (Lys-Gly) (interchain with G-Cter in ubiquitin) linkage.

The protein belongs to the histone H2B family. In terms of assembly, the nucleosome is a histone octamer containing two molecules each of H2A, H2B, H3 and H4 assembled in one H3-H4 heterotetramer and two H2A-H2B heterodimers. The octamer wraps approximately 147 bp of DNA. Can be acetylated to form H2BK6ac and H2BK33ac. Post-translationally, monoubiquitinated to form H2BK143ub1; may give a specific tag for epigenetic transcriptional activation.

The protein resides in the nucleus. The protein localises to the chromosome. Its function is as follows. Core component of nucleosome. Nucleosomes wrap and compact DNA into chromatin, limiting DNA accessibility to the cellular machineries which require DNA as a template. Histones thereby play a central role in transcription regulation, DNA repair, DNA replication and chromosomal stability. DNA accessibility is regulated via a complex set of post-translational modifications of histones, also called histone code, and nucleosome remodeling. The polypeptide is Histone H2B.4 (Zea mays (Maize)).